Consider the following 126-residue polypeptide: Topoisomerase I damage affected protein 2 (126 aa).

S2 carries the N-acetylserine modification.

The protein belongs to the TDA2 family.

Its subcellular location is the cytoplasm. The protein localises to the cell projection. This Saccharomyces cerevisiae (strain JAY291) (Baker's yeast) protein is Topoisomerase I damage affected protein 2 (TDA2).